We begin with the raw amino-acid sequence, 220 residues long: Iron-sulfur cluster repair protein YtfE (220 aa).

Belongs to the RIC family. YtfE subfamily. Homodimer.

The protein resides in the cytoplasm. Functionally, di-iron-containing protein involved in the repair of iron-sulfur clusters damaged by oxidative and nitrosative stress conditions. The sequence is that of Iron-sulfur cluster repair protein YtfE from Escherichia coli O157:H7.